The following is a 327-amino-acid chain: Beta-ketoacyl-[acyl-carrier-protein] synthase III (327 aa).

Residues Cys-112 and His-253 contribute to the active site. The ACP-binding stretch occupies residues 254-258 (QANER). Asn-283 is a catalytic residue.

The protein belongs to the thiolase-like superfamily. FabH family. As to quaternary structure, homodimer.

It is found in the cytoplasm. It carries out the reaction malonyl-[ACP] + acetyl-CoA + H(+) = 3-oxobutanoyl-[ACP] + CO2 + CoA. Its pathway is lipid metabolism; fatty acid biosynthesis. Functionally, catalyzes the condensation reaction of fatty acid synthesis by the addition to an acyl acceptor of two carbons from malonyl-ACP. Catalyzes the first condensation reaction which initiates fatty acid synthesis and may therefore play a role in governing the total rate of fatty acid production. Possesses both acetoacetyl-ACP synthase and acetyl transacylase activities. Its substrate specificity determines the biosynthesis of branched-chain and/or straight-chain of fatty acids. The polypeptide is Beta-ketoacyl-[acyl-carrier-protein] synthase III (Chlamydia muridarum (strain MoPn / Nigg)).